Consider the following 746-residue polypeptide: Exostosin-1 (746 aa).

Topologically, residues 1-7 are cytoplasmic; sequence MQAKKRY. A helical; Signal-anchor for type II membrane protein transmembrane segment spans residues 8–28; the sequence is FILLSAGSCLALLFYFGGLQF. Over 29–746 the chain is Lumenal; that stretch reads RASRSHSRRE…RKKYRDIERL (718 aa). A glycan (N-linked (GlcNAc...) asparagine) is linked at Asn-89. Disulfide bonds link Cys-98/Cys-103 and Cys-109/Cys-152. A protein is bound by residues Leu-166 and Tyr-203. Positions 267, 269, 271, and 280 each coordinate UDP. Cysteines 298 and 312 form a disulfide. His-300 contacts a protein. The UDP site is built by Tyr-319 and Tyr-324. N-linked (GlcNAc...) asparagine glycosylation is present at Asn-330. Disulfide bonds link Cys-334–Cys-355 and Cys-652–Cys-704. Residues Arg-346 and Glu-349 each coordinate UDP.

It belongs to the glycosyltransferase 47 family. As to quaternary structure, part of the heparan sulfate polymerase, a dimeric complex composed of EXT1 and EXT2. Could also form homooligomeric complexes. Interacts with NDST1. In terms of processing, N-glycosylated.

The protein resides in the golgi apparatus membrane. Its subcellular location is the golgi apparatus. It localises to the cis-Golgi network membrane. It is found in the endoplasmic reticulum membrane. The enzyme catalyses 3-O-{alpha-D-GlcNAc-[(1-&gt;4)-beta-D-GlcA-(1-&gt;4)-alpha-D-GlcNAc](n)-(1-&gt;4)-beta-D-GlcA-(1-&gt;3)-beta-D-Gal-(1-&gt;3)-beta-D-Gal-(1-&gt;4)-beta-D-Xyl}-L-seryl-[protein] + UDP-alpha-D-glucuronate = 3-O-{[(1-&gt;4)-beta-D-GlcA-(1-&gt;4)-alpha-D-GlcNAc](n+1)-(1-&gt;4)-beta-D-GlcA-(1-&gt;3)-beta-D-Gal-(1-&gt;3)-beta-D-Gal-(1-&gt;4)-beta-D-Xyl}-L-seryl-[protein] + UDP + H(+). It functions in the pathway protein modification; protein glycosylation. Functionally, glycosyltransferase forming with EXT2 the heterodimeric heparan sulfate polymerase which catalyzes the elongation of the heparan sulfate glycan backbone. Glycan backbone extension consists in the alternating transfer of (1-&gt;4)-beta-D-GlcA and (1-&gt;4)-alpha-D-GlcNAc residues from their respective UDP-sugar donors. Both EXT1 and EXT2 are required for the full activity of the polymerase since EXT1 bears the N-acetylglucosaminyl-proteoglycan 4-beta-glucuronosyltransferase activity within the complex while EXT2 carries the glucuronosyl-N-acetylglucosaminyl-proteoglycan 4-alpha-N-acetylglucosaminyltransferase activity. Heparan sulfate proteoglycans are ubiquitous components of the extracellular matrix and play an important role in tissue homeostasis and signaling. In Pongo abelii (Sumatran orangutan), this protein is Exostosin-1 (EXT1).